The sequence spans 205 residues: Thiamine-phosphate synthase (205 aa).

4-amino-2-methyl-5-(diphosphooxymethyl)pyrimidine-binding positions include 37 to 41 (QVREK) and asparagine 69. Mg(2+) is bound by residues aspartate 70 and aspartate 89. Residue serine 108 participates in 4-amino-2-methyl-5-(diphosphooxymethyl)pyrimidine binding. Position 134 to 136 (134 to 136 (TGS)) interacts with 2-[(2R,5Z)-2-carboxy-4-methylthiazol-5(2H)-ylidene]ethyl phosphate. Lysine 137 serves as a coordination point for 4-amino-2-methyl-5-(diphosphooxymethyl)pyrimidine. 2-[(2R,5Z)-2-carboxy-4-methylthiazol-5(2H)-ylidene]ethyl phosphate-binding positions include glycine 165 and 185–186 (IS).

Belongs to the thiamine-phosphate synthase family. Requires Mg(2+) as cofactor.

The catalysed reaction is 2-[(2R,5Z)-2-carboxy-4-methylthiazol-5(2H)-ylidene]ethyl phosphate + 4-amino-2-methyl-5-(diphosphooxymethyl)pyrimidine + 2 H(+) = thiamine phosphate + CO2 + diphosphate. It carries out the reaction 2-(2-carboxy-4-methylthiazol-5-yl)ethyl phosphate + 4-amino-2-methyl-5-(diphosphooxymethyl)pyrimidine + 2 H(+) = thiamine phosphate + CO2 + diphosphate. It catalyses the reaction 4-methyl-5-(2-phosphooxyethyl)-thiazole + 4-amino-2-methyl-5-(diphosphooxymethyl)pyrimidine + H(+) = thiamine phosphate + diphosphate. Its pathway is cofactor biosynthesis; thiamine diphosphate biosynthesis; thiamine phosphate from 4-amino-2-methyl-5-diphosphomethylpyrimidine and 4-methyl-5-(2-phosphoethyl)-thiazole: step 1/1. Condenses 4-methyl-5-(beta-hydroxyethyl)thiazole monophosphate (THZ-P) and 2-methyl-4-amino-5-hydroxymethyl pyrimidine pyrophosphate (HMP-PP) to form thiamine monophosphate (TMP). The sequence is that of Thiamine-phosphate synthase from Clostridium botulinum (strain ATCC 19397 / Type A).